A 556-amino-acid polypeptide reads, in one-letter code: Formate--tetrahydrofolate ligase (556 aa).

65 to 72 (TPAGEGKS) is a binding site for ATP.

It belongs to the formate--tetrahydrofolate ligase family.

The catalysed reaction is (6S)-5,6,7,8-tetrahydrofolate + formate + ATP = (6R)-10-formyltetrahydrofolate + ADP + phosphate. Its pathway is one-carbon metabolism; tetrahydrofolate interconversion. This is Formate--tetrahydrofolate ligase from Streptococcus pneumoniae serotype 4 (strain ATCC BAA-334 / TIGR4).